A 444-amino-acid chain; its full sequence is Acyl-CoA (8-3)-desaturase (444 aa).

Methionine 1 is modified (N-acetylmethionine). Topologically, residues 1-121 (MAPDPVAAKT…FRELRATVEQ (121 aa)) are cytoplasmic. The Cytochrome b5 heme-binding domain maps to 17 to 94 (PRYFTWDEVA…MNSLLIGELS (78 aa)). The chain crosses the membrane as a helical span at residues 122–142 (MGLMKANHVFFLLYLLHILLL). The Lumenal portion of the chain corresponds to 143 to 146 (DGAA). Residues 147-167 (WLTLWIFGTSFLPFLLCAVLL) traverse the membrane as a helical segment. Over 168-267 (TAAQIQAGWL…PYNHQHKYFF (100 aa)) the chain is Cytoplasmic. The Histidine box-1 signature appears at 179–183 (HDLGH). Residues 216-220 (HFQHH) carry the Histidine box-2 motif. Residues 268 to 288 (LIGPPALVPFFFQWYVFYFVI) traverse the membrane as a helical segment. The Lumenal segment spans residues 289–305 (QRKKWVDLAWMITFYIR). The helical transmembrane segment at 306-326 (LLLTYVPLLGLKAFLGLYFIV) threads the bilayer. At 327-444 (RFLESNWFVW…QLWLDAYLHQ (118 aa)) the chain is on the cytoplasmic side. Positions 382 to 386 (QIEHH) match the Histidine box-3 motif.

The protein belongs to the fatty acid desaturase type 1 family. Widely expressed. Expressed in brain, liver and thymus (at protein level). Isoform 1 seems to be more abundant than isoform 2. Expression of isoform 2 is very low in spleen and not detectable in skeletal muscle.

The protein localises to the endoplasmic reticulum membrane. It is found in the mitochondrion. It catalyses the reaction (8Z,11Z,14Z)-eicosatrienoyl-CoA + 2 Fe(II)-[cytochrome b5] + O2 + 2 H(+) = (5Z,8Z,11Z,14Z)-eicosatetraenoyl-CoA + 2 Fe(III)-[cytochrome b5] + 2 H2O. The enzyme catalyses (8Z,11Z,14Z,17Z)-eicosatetraenoyl-CoA + 2 Fe(II)-[cytochrome b5] + O2 + 2 H(+) = (5Z,8Z,11Z,14Z,17Z)-eicosapentaenoyl-CoA + 2 Fe(III)-[cytochrome b5] + 2 H2O. It carries out the reaction (11E)-octadecenoyl-CoA + 2 Fe(II)-[cytochrome b5] + O2 + 2 H(+) = (5Z,11E)-octadecadienoyl-CoA + 2 Fe(III)-[cytochrome b5] + 2 H2O. The protein operates within lipid metabolism; polyunsaturated fatty acid biosynthesis. Functionally, acts as a front-end fatty acyl-coenzyme A (CoA) desaturase that introduces a cis double bond at carbon 5 located between a preexisting double bond and the carboxyl end of the fatty acyl chain. Involved in biosynthesis of highly unsaturated fatty acids (HUFA) from the essential polyunsaturated fatty acids (PUFA) linoleic acid (LA) (18:2n-6) and alpha-linolenic acid (ALA) (18:3n-3) precursors. Specifically, desaturates dihomo-gamma-linoleoate (DGLA) (20:3n-6) and eicosatetraenoate (ETA) (20:4n-3) to generate arachidonate (AA) (20:4n-6) and eicosapentaenoate (EPA) (20:5n-3), respectively. As a rate limiting enzyme for DGLA (20:3n-6) and AA (20:4n-6)-derived eicosanoid biosynthesis, controls the metabolism of inflammatory lipids like prostaglandin E2, critical for efficient acute inflammatory response and maintenance of epithelium homeostasis. Contributes to membrane phospholipid biosynthesis by providing AA (20:4n-6) as a major acyl chain esterified into phospholipids. In particular, regulates phosphatidylinositol-4,5-bisphosphate levels, modulating inflammatory cytokine production in T-cells. Also desaturates (11E)-octadecenoate (trans-vaccenoate)(18:1n-9), a metabolite in the biohydrogenation pathway of LA (18:2n-6). In terms of biological role, does not exhibit any catalytic activity toward 20:3n-6, but it may enhance FADS2 activity. The sequence is that of Acyl-CoA (8-3)-desaturase from Papio anubis (Olive baboon).